A 355-amino-acid chain; its full sequence is Chorismate synthase (355 aa).

2 residues coordinate NADP(+): Arg-44 and Arg-49. Residues 121 to 123 (HFS), Gly-277, 292 to 296 (KPTPS), and Arg-319 contribute to the FMN site.

The protein belongs to the chorismate synthase family. It depends on FMNH2 as a cofactor.

It carries out the reaction 5-O-(1-carboxyvinyl)-3-phosphoshikimate = chorismate + phosphate. Its pathway is metabolic intermediate biosynthesis; chorismate biosynthesis; chorismate from D-erythrose 4-phosphate and phosphoenolpyruvate: step 7/7. Catalyzes the anti-1,4-elimination of the C-3 phosphate and the C-6 proR hydrogen from 5-enolpyruvylshikimate-3-phosphate (EPSP) to yield chorismate, which is the branch point compound that serves as the starting substrate for the three terminal pathways of aromatic amino acid biosynthesis. This reaction introduces a second double bond into the aromatic ring system. The polypeptide is Chorismate synthase (Thermococcus kodakarensis (strain ATCC BAA-918 / JCM 12380 / KOD1) (Pyrococcus kodakaraensis (strain KOD1))).